Consider the following 305-residue polypeptide: GMP synthase [glutamine-hydrolyzing] subunit B (305 aa).

The GMPS ATP-PPase domain maps to 2-184 (VKTEKFIQKS…LGLPPEIQHR (183 aa)). 29–35 (SGGVDSS) is a binding site for ATP.

Heterodimer composed of a glutamine amidotransferase subunit (A) and a GMP-binding subunit (B).

It carries out the reaction XMP + L-glutamine + ATP + H2O = GMP + L-glutamate + AMP + diphosphate + 2 H(+). Its pathway is purine metabolism; GMP biosynthesis; GMP from XMP (L-Gln route): step 1/1. Catalyzes the synthesis of GMP from XMP. The protein is GMP synthase [glutamine-hydrolyzing] subunit B of Methanoregula boonei (strain DSM 21154 / JCM 14090 / 6A8).